The chain runs to 331 residues: Adenosine deaminase (331 aa).

Zn(2+)-binding residues include His-12 and His-14. Residues His-14, Asp-16, and Gly-170 each coordinate substrate. His-197 contributes to the Zn(2+) binding site. The active-site Proton donor is the Glu-200. Asp-278 is a binding site for Zn(2+). Residue Asp-279 participates in substrate binding.

The protein belongs to the metallo-dependent hydrolases superfamily. Adenosine and AMP deaminases family. Adenosine deaminase subfamily. Zn(2+) serves as cofactor.

It catalyses the reaction adenosine + H2O + H(+) = inosine + NH4(+). It carries out the reaction 2'-deoxyadenosine + H2O + H(+) = 2'-deoxyinosine + NH4(+). Functionally, catalyzes the hydrolytic deamination of adenosine and 2-deoxyadenosine. The sequence is that of Adenosine deaminase from Shewanella sp. (strain MR-7).